We begin with the raw amino-acid sequence, 275 residues long: Phosphate import ATP-binding protein PstB (275 aa).

The 242-residue stretch at 29–270 (VSVRDLNFYY…PTDRRTQDYI (242 aa)) folds into the ABC transporter domain. 61–68 (GPSGCGKS) lines the ATP pocket.

It belongs to the ABC transporter superfamily. Phosphate importer (TC 3.A.1.7) family. In terms of assembly, the complex is composed of two ATP-binding proteins (PstB), two transmembrane proteins (PstC and PstA) and a solute-binding protein (PstS).

The protein localises to the cell inner membrane. The catalysed reaction is phosphate(out) + ATP + H2O = ADP + 2 phosphate(in) + H(+). Its function is as follows. Part of the ABC transporter complex PstSACB involved in phosphate import. Responsible for energy coupling to the transport system. The chain is Phosphate import ATP-binding protein PstB from Rhodopseudomonas palustris (strain BisB18).